The chain runs to 398 residues: NADH-quinone oxidoreductase subunit D (398 aa).

It belongs to the complex I 49 kDa subunit family. As to quaternary structure, NDH-1 is composed of 14 different subunits. Subunits NuoB, C, D, E, F, and G constitute the peripheral sector of the complex.

The protein localises to the cell inner membrane. It carries out the reaction a quinone + NADH + 5 H(+)(in) = a quinol + NAD(+) + 4 H(+)(out). In terms of biological role, NDH-1 shuttles electrons from NADH, via FMN and iron-sulfur (Fe-S) centers, to quinones in the respiratory chain. The immediate electron acceptor for the enzyme in this species is believed to be ubiquinone. Couples the redox reaction to proton translocation (for every two electrons transferred, four hydrogen ions are translocated across the cytoplasmic membrane), and thus conserves the redox energy in a proton gradient. This is NADH-quinone oxidoreductase subunit D from Bradyrhizobium diazoefficiens (strain JCM 10833 / BCRC 13528 / IAM 13628 / NBRC 14792 / USDA 110).